A 56-amino-acid chain; its full sequence is Small ribosomal subunit protein uS14 (56 aa).

Zn(2+) is bound by residues Cys-21, Cys-24, Cys-39, and Cys-42.

The protein belongs to the universal ribosomal protein uS14 family. Zinc-binding uS14 subfamily. Part of the 30S ribosomal subunit. Requires Zn(2+) as cofactor.

In terms of biological role, binds 16S rRNA, required for the assembly of 30S particles. The sequence is that of Small ribosomal subunit protein uS14 from Pyrococcus abyssi (strain GE5 / Orsay).